The sequence spans 390 residues: Ammonium/H(+) antiporter subunit AmhT (390 aa).

10 consecutive transmembrane segments (helical) span residues 2–22 (VIPELFSAGLILLLLFITGFV), 31–51 (VVIFILLGIAVGGLLSGSHLL), 52–72 (HFAGEVGIVLLFFMLGMEFPL), 94–114 (FGVTMAICMMMGLDVITSLII), 143–163 (FMLGLLIFEDLVAPILVAVLV), 178–198 (LLVVKVVALVAGAVILGVFLF), 212–232 (DLFILFVIGLALMYGGLALYL), 266–286 (LLLPLFFLYFGTTISFSEGIP), 288–308 (IPLLILVLVWSVIAKVIVGVL), and 351–371 (VFILASAMIGILLFQFAPSIA).

Belongs to the monovalent cation:proton antiporter 2 (CPA2) transporter (TC 2.A.37) family. In terms of assembly, interacts with AmhM.

The protein localises to the cell membrane. AmhT alone exhibits antiport activity, but interaction with AmhM confers different properties, such as higher KM for potassium. In terms of biological role, ammonium/proton antiporter that mediates the efflux of ammonium ions. Can also transport potassium or rubidium, but not sodium or lithium. The polypeptide is Ammonium/H(+) antiporter subunit AmhT (amhT) (Alkalihalophilus pseudofirmus (strain ATCC BAA-2126 / JCM 17055 / OF4) (Bacillus pseudofirmus)).